The following is a 494-amino-acid chain: Rho GTPase-activating protein 19 (494 aa).

A2 is modified (N-acetylalanine). Phosphoserine occurs at positions 7 and 31. A Rho-GAP domain is found at 102–308; that stretch reads MSLKRKEKGV…FMIKHSQKLF (207 aa). The interval 399–451 is disordered; that stretch reads QSLTQTPGREPSTPRVQKRARSRSFSGLIKRKVLGSQMTSEKKNSSPAPESVA. Phosphoserine occurs at positions 422, 438, and 470. Residue T478 is modified to Phosphothreonine.

GTPase activator for the Rho-type GTPases by converting them to an inactive GDP-bound state. This chain is Rho GTPase-activating protein 19 (Arhgap19), found in Mus musculus (Mouse).